We begin with the raw amino-acid sequence, 185 residues long: Ribosome-recycling factor (185 aa).

The protein belongs to the RRF family.

The protein localises to the cytoplasm. Functionally, responsible for the release of ribosomes from messenger RNA at the termination of protein biosynthesis. May increase the efficiency of translation by recycling ribosomes from one round of translation to another. The protein is Ribosome-recycling factor of Mycobacteroides abscessus (strain ATCC 19977 / DSM 44196 / CCUG 20993 / CIP 104536 / JCM 13569 / NCTC 13031 / TMC 1543 / L948) (Mycobacterium abscessus).